Consider the following 500-residue polypeptide: Pyridine nucleotide-disulfide oxidoreductase domain-containing protein 1 (500 aa).

Methionine 1 carries the N-acetylmethionine modification.

Belongs to the class-I pyridine nucleotide-disulfide oxidoreductase family. PYROXD1 subfamily. FAD is required as a cofactor.

It localises to the nucleus. The protein localises to the cytoplasm. The protein resides in the myofibril. Its subcellular location is the sarcomere. Functionally, probable FAD-dependent oxidoreductase; involved in the cellular oxidative stress response. Required for normal sarcomere structure and muscle fiber integrity. This is Pyridine nucleotide-disulfide oxidoreductase domain-containing protein 1 (PYROXD1) from Pongo abelii (Sumatran orangutan).